Reading from the N-terminus, the 92-residue chain is Small ribosomal subunit protein uS19 (92 aa).

It belongs to the universal ribosomal protein uS19 family.

Functionally, protein S19 forms a complex with S13 that binds strongly to the 16S ribosomal RNA. In Oceanobacillus iheyensis (strain DSM 14371 / CIP 107618 / JCM 11309 / KCTC 3954 / HTE831), this protein is Small ribosomal subunit protein uS19.